Reading from the N-terminus, the 292-residue chain is MQTTLQITPTGATLGATVTGVHLATLDDAGFAALHAAWLQHALLIFPGQHLSNDQQITFAKRFGAIERIGGGDIVAISNVKADGTVRQHSPAEWDDMMKVIVGNMAWHADSTYMPVMAQGAVFSAEVVPAVGGRTCFADMRAAYDALDEATRALVHQRSARHSLVYSQSKLGHVQQAGSAYIGYGMDTTATPLRPLVKVHPETGRPSLLIGRHAHAIPGMDAAESERFLEGLVDWACQAPRVHAHQWAAGDVVVWDNRCLLHRAEPWDFKLPRVMWHSRLAGRPETEGAALV.

Fe cation contacts are provided by His-108 and Asp-110. 2-oxoglutarate-binding residues include Thr-135 and Trp-247. Fe cation is bound at residue His-262. Position 273 (Arg-273) interacts with 2-oxoglutarate.

This sequence belongs to the TfdA dioxygenase family. In terms of assembly, monomer. The cofactor is Fe cation. It depends on L-ascorbate as a cofactor.

The enzyme catalyses (S)-2-(4-chloro-2-methylphenoxy)propanoate + 2-oxoglutarate + O2 = 2-methyl-4-chlorophenol + pyruvate + succinate + CO2. It catalyses the reaction (S)-(2,4-dichlorophenoxy)propanoate + 2-oxoglutarate + O2 = 2,4-dichlorophenol + pyruvate + succinate + CO2. Its pathway is xenobiotic degradation; 2-(2,4-dichlorophenoxy)propanoate degradation. Inhibited by divalent cations, most significantly by copper and nickel, and by diethylpyrocarbonate (DEPC). Involved in the degradation of the phenoxypropionate herbicides. Catalyzes the enantiospecific cleavage of the ether bond in the herbicid S-dichlorprop ((S)-2-(2,4-dichlorophenoxy)propionate)(S-2,4-DP) and S-mecoprop ((S)-2-(4-chloro-2-methylphenoxy)propionate)(S-2,4-MCPP). It can also accept (RS)-2-(4-chlorophenoxy)propionate, (RS)-2-(m-chlorophenoxy)propionate and phenoxyacetate derivatives such as 2,4-dichlorophenoxyacetate (2,4-D), however it can only accept 2-oxoglutarate as oxygen acceptor. This Delftia acidovorans (Pseudomonas acidovorans) protein is (S)-phenoxypropionate/alpha-ketoglutarate-dioxygenase.